The following is an 876-amino-acid chain: Alanine--tRNA ligase (876 aa).

Zn(2+) is bound by residues histidine 565, histidine 569, cysteine 667, and histidine 671.

Belongs to the class-II aminoacyl-tRNA synthetase family. Requires Zn(2+) as cofactor.

It is found in the cytoplasm. It catalyses the reaction tRNA(Ala) + L-alanine + ATP = L-alanyl-tRNA(Ala) + AMP + diphosphate. In terms of biological role, catalyzes the attachment of alanine to tRNA(Ala) in a two-step reaction: alanine is first activated by ATP to form Ala-AMP and then transferred to the acceptor end of tRNA(Ala). Also edits incorrectly charged Ser-tRNA(Ala) and Gly-tRNA(Ala) via its editing domain. The polypeptide is Alanine--tRNA ligase (Staphylococcus aureus (strain bovine RF122 / ET3-1)).